The chain runs to 433 residues: Phosphomethylpyrimidine synthase (433 aa).

Residues asparagine 66, methionine 94, tyrosine 123, histidine 162, 184–186, 225–228, and glutamate 264 each bind substrate; these read SRG and DALR. Histidine 268 lines the Zn(2+) pocket. Tyrosine 291 lines the substrate pocket. Histidine 332 provides a ligand contact to Zn(2+). [4Fe-4S] cluster contacts are provided by cysteine 408, cysteine 411, and cysteine 415.

The protein belongs to the ThiC family. The cofactor is [4Fe-4S] cluster.

The catalysed reaction is 5-amino-1-(5-phospho-beta-D-ribosyl)imidazole + S-adenosyl-L-methionine = 4-amino-2-methyl-5-(phosphooxymethyl)pyrimidine + CO + 5'-deoxyadenosine + formate + L-methionine + 3 H(+). The protein operates within cofactor biosynthesis; thiamine diphosphate biosynthesis. Its function is as follows. Catalyzes the synthesis of the hydroxymethylpyrimidine phosphate (HMP-P) moiety of thiamine from aminoimidazole ribotide (AIR) in a radical S-adenosyl-L-methionine (SAM)-dependent reaction. This is Phosphomethylpyrimidine synthase from Saccharolobus islandicus (strain M.14.25 / Kamchatka #1) (Sulfolobus islandicus).